The chain runs to 510 residues: Zinc finger and SCAN domain-containing protein 18 (510 aa).

Residues 1–40 form a disordered region; it reads MLPLEKAFASPRSSPAPPDLPTPGSAAGVQQEEPETIPER. The 83-residue stretch at 49 to 131 folds into the SCAN box domain; it reads RLRFREFVYQ…SLVEGLADVL (83 aa). 4 disordered regions span residues 172 to 191, 201 to 231, 263 to 413, and 461 to 510; these read ALGA…SPDP, EAKT…EWGH, TEEL…GKPY, and KTHE…EAQR. Basic and acidic residues-rich tracts occupy residues 214–231 and 263–273; these read QKLK…EWGH and TEELRLVERDP. Over residues 288 to 299 the composition is skewed to low complexity; that stretch reads AGCACEEAAPAG. The segment covering 344–356 has biased composition (polar residues); the sequence is DSATGSQRQSVIQ. C2H2-type zinc fingers lie at residues 413–435 and 441–463; these read YACG…HSSH and YACQ…QKTH. The span at 491-501 shows a compositional bias: low complexity; sequence GGPPESVEGEA.

This sequence belongs to the krueppel C2H2-type zinc-finger protein family.

Its subcellular location is the nucleus. May be involved in transcriptional regulation. The sequence is that of Zinc finger and SCAN domain-containing protein 18 (ZSCAN18) from Homo sapiens (Human).